Here is a 296-residue protein sequence, read N- to C-terminus: Ribosomal RNA small subunit methyltransferase H (296 aa).

S-adenosyl-L-methionine contacts are provided by residues 38 to 40 (GAH), glutamate 57, phenylalanine 80, aspartate 103, and histidine 110.

The protein belongs to the methyltransferase superfamily. RsmH family.

The protein resides in the cytoplasm. It catalyses the reaction cytidine(1402) in 16S rRNA + S-adenosyl-L-methionine = N(4)-methylcytidine(1402) in 16S rRNA + S-adenosyl-L-homocysteine + H(+). Functionally, specifically methylates the N4 position of cytidine in position 1402 (C1402) of 16S rRNA. In Borrelia garinii subsp. bavariensis (strain ATCC BAA-2496 / DSM 23469 / PBi) (Borreliella bavariensis), this protein is Ribosomal RNA small subunit methyltransferase H.